The following is a 147-amino-acid chain: Hemoglobin subunit beta (147 aa).

Residues 3–147 form the Globin domain; sequence HWTAEEKQII…VAHALARKYH (145 aa). The heme b site is built by His64 and His93.

Heterotetramer of two alpha (or alpha-D) and two beta chains. As to expression, red blood cells.

Involved in oxygen transport from the lung to the various peripheral tissues. The beta chain is a component of adult hemoglobin A and D. The chain is Hemoglobin subunit beta from Aythya fuligula (Tufted duck).